A 1426-amino-acid polypeptide reads, in one-letter code: Ferlin 2 (1426 aa).

5 consecutive C2 domains span residues 1–111, 161–279, 512–638, 1031–1154, and 1189–1318; these read MGKT…QIRK, RKAV…PRWF, EKSK…ESPT, SEDR…QKSM, and KAGE…TLNS. The segment at 1357–1377 is disordered; it reads SKPVGLGREPPNRDPRLTTPQ. Residues 1366 to 1377 show a composition bias toward basic and acidic residues; the sequence is PPNRDPRLTTPQ. A helical transmembrane segment spans residues 1404–1424; that stretch reads VAAVVFLSIWIFVVAFLYPSL.

The protein belongs to the ferlin family.

The protein localises to the membrane. The protein resides in the inner membrane complex. It is found in the cytoplasmic vesicle. Its subcellular location is the secretory vesicle. It localises to the rhoptry. Regulates rhoptry secretion. Required for completing the lytic cycle. Required for host cell invasion. Not required for microneme secretion and conoid extrusion. This Toxoplasma gondii protein is Ferlin 2.